The following is a 256-amino-acid chain: Large ribosomal subunit protein bL28m (256 aa).

The transit peptide at 1–55 (MPLHKVPVGLWKRLRLREGIYSRLPAHYLRSLEEARTPTPVHFRPHGAKFKINPK) directs the protein to the mitochondrion.

Belongs to the bacterial ribosomal protein bL28 family. As to quaternary structure, component of the mitochondrial ribosome large subunit (39S) which comprises a 16S rRNA and about 50 distinct proteins. Interacts with OXA1L.

It is found in the mitochondrion. The protein is Large ribosomal subunit protein bL28m (MRPL28) of Bos taurus (Bovine).